The following is a 250-amino-acid chain: 2,3-bisphosphoglycerate-dependent phosphoglycerate mutase (250 aa).

Substrate-binding positions include 10 to 17, 23 to 24, R62, 89 to 92, K100, 116 to 117, and 185 to 186; these read RHGESEWN, TG, ERHY, RR, and GN. H11 functions as the Tele-phosphohistidine intermediate in the catalytic mechanism. E89 serves as the catalytic Proton donor/acceptor.

It belongs to the phosphoglycerate mutase family. BPG-dependent PGAM subfamily. In terms of assembly, homodimer.

It catalyses the reaction (2R)-2-phosphoglycerate = (2R)-3-phosphoglycerate. It functions in the pathway carbohydrate degradation; glycolysis; pyruvate from D-glyceraldehyde 3-phosphate: step 3/5. Functionally, catalyzes the interconversion of 2-phosphoglycerate and 3-phosphoglycerate. The protein is 2,3-bisphosphoglycerate-dependent phosphoglycerate mutase of Edwardsiella ictaluri (strain 93-146).